We begin with the raw amino-acid sequence, 461 residues long: Porin AaxA (461 aa).

An N-terminal signal peptide occupies residues 1-22 (MSFRSVLLTALLSLSFTTTMQA).

This sequence belongs to the OprB family.

The protein resides in the cell outer membrane. In terms of biological role, facilitates L-arginine uptake, as part of the AaxABC system. The arginine uptake by the bacterium in the macrophage may be a virulence factor against the host innate immune response. In Chlamydia trachomatis serovar D (strain ATCC VR-885 / DSM 19411 / UW-3/Cx), this protein is Porin AaxA (aaxA).